Here is a 464-residue protein sequence, read N- to C-terminus: 3-isopropylmalate dehydratase large subunit (464 aa).

Residues C337, C397, and C400 each coordinate [4Fe-4S] cluster.

Belongs to the aconitase/IPM isomerase family. LeuC type 1 subfamily. As to quaternary structure, heterodimer of LeuC and LeuD. [4Fe-4S] cluster serves as cofactor.

It carries out the reaction (2R,3S)-3-isopropylmalate = (2S)-2-isopropylmalate. The protein operates within amino-acid biosynthesis; L-leucine biosynthesis; L-leucine from 3-methyl-2-oxobutanoate: step 2/4. In terms of biological role, catalyzes the isomerization between 2-isopropylmalate and 3-isopropylmalate, via the formation of 2-isopropylmaleate. In Bacillus cytotoxicus (strain DSM 22905 / CIP 110041 / 391-98 / NVH 391-98), this protein is 3-isopropylmalate dehydratase large subunit.